An 82-amino-acid polypeptide reads, in one-letter code: Putative membrane protein insertion efficiency factor (82 aa).

It belongs to the UPF0161 family.

It localises to the cell inner membrane. Functionally, could be involved in insertion of integral membrane proteins into the membrane. The sequence is that of Putative membrane protein insertion efficiency factor from Rickettsia felis (strain ATCC VR-1525 / URRWXCal2) (Rickettsia azadi).